The chain runs to 1040 residues: Multidrug resistance protein MdtB (1040 aa).

A run of 12 helical transmembrane segments spans residues 25-45 (LLMA…PVAA), 347-367 (LMLA…NIPA), 369-389 (IIPG…MVFL), 396-416 (LTLM…IVVI), 440-460 (IGFT…PLLF), 472-492 (FAVT…TLTP), 537-557 (WLTL…WIVI), 863-883 (LGST…VLGV), 888-908 (FIHP…ALLA), 910-930 (IIAG…LIGI), 968-988 (ILMT…STGV), and 998-1018 (IAMV…TPVI).

This sequence belongs to the resistance-nodulation-cell division (RND) (TC 2.A.6) family. MdtB subfamily. As to quaternary structure, part of a tripartite efflux system composed of MdtA, MdtB and MdtC. MdtB forms a heteromultimer with MdtC.

It localises to the cell inner membrane. The chain is Multidrug resistance protein MdtB from Salmonella dublin (strain CT_02021853).